The primary structure comprises 238 residues: Ribonuclease PH (238 aa).

Residues arginine 86 and 124–126 (GTR) each bind phosphate.

Belongs to the RNase PH family. Homohexameric ring arranged as a trimer of dimers.

The catalysed reaction is tRNA(n+1) + phosphate = tRNA(n) + a ribonucleoside 5'-diphosphate. Its function is as follows. Phosphorolytic 3'-5' exoribonuclease that plays an important role in tRNA 3'-end maturation. Removes nucleotide residues following the 3'-CCA terminus of tRNAs; can also add nucleotides to the ends of RNA molecules by using nucleoside diphosphates as substrates, but this may not be physiologically important. Probably plays a role in initiation of 16S rRNA degradation (leading to ribosome degradation) during starvation. This Pasteurella multocida (strain Pm70) protein is Ribonuclease PH.